We begin with the raw amino-acid sequence, 187 residues long: Large ribosomal subunit protein uL6 (187 aa).

The disordered stretch occupies residues 151-170; it reads EAARIRSLRPPEPYKGKGIK.

It belongs to the universal ribosomal protein uL6 family. Part of the 50S ribosomal subunit.

In terms of biological role, this protein binds to the 23S rRNA, and is important in its secondary structure. It is located near the subunit interface in the base of the L7/L12 stalk, and near the tRNA binding site of the peptidyltransferase center. The chain is Large ribosomal subunit protein uL6 from Chloroflexus aurantiacus (strain ATCC 29366 / DSM 635 / J-10-fl).